Here is a 497-residue protein sequence, read N- to C-terminus: Glutamyl-tRNA(Gln) amidotransferase subunit A (497 aa).

Residues K85 and S160 each act as charge relay system in the active site. The Acyl-ester intermediate role is filled by S184.

Belongs to the amidase family. GatA subfamily. As to quaternary structure, heterotrimer of A, B and C subunits.

The catalysed reaction is L-glutamyl-tRNA(Gln) + L-glutamine + ATP + H2O = L-glutaminyl-tRNA(Gln) + L-glutamate + ADP + phosphate + H(+). Functionally, allows the formation of correctly charged Gln-tRNA(Gln) through the transamidation of misacylated Glu-tRNA(Gln) in organisms which lack glutaminyl-tRNA synthetase. The reaction takes place in the presence of glutamine and ATP through an activated gamma-phospho-Glu-tRNA(Gln). The chain is Glutamyl-tRNA(Gln) amidotransferase subunit A (gatA) from Mycobacterium leprae (strain TN).